The chain runs to 569 residues: Glycylpeptide N-tetradecanoyltransferase (569 aa).

Residues 1-18 (MPPTEESKPVDPAQEKQA) are compositionally biased toward basic and acidic residues. Residues 1-82 (MPPTEESKPV…STESSAEVGL (82 aa)) are disordered. A compositionally biased stretch (basic residues) spans 55 to 68 (TKKKNKKKSKKKNK). Tetradecanoyl-CoA-binding positions include 158–161 (YKFW), 291–293 (LCI), and 299–303 (GKRLA). The active-site Proton acceptor; via carboxylate is Val-569.

This sequence belongs to the NMT family. Monomer.

Its subcellular location is the cytoplasm. It catalyses the reaction N-terminal glycyl-[protein] + tetradecanoyl-CoA = N-tetradecanoylglycyl-[protein] + CoA + H(+). Functionally, adds a myristoyl group to the N-terminal glycine residue of certain cellular proteins. This is Glycylpeptide N-tetradecanoyltransferase (gtt-1) from Neurospora crassa (strain ATCC 24698 / 74-OR23-1A / CBS 708.71 / DSM 1257 / FGSC 987).